The chain runs to 301 residues: Glycerol-3-phosphate dehydrogenase [NAD(P)+] (301 aa).

3 residues coordinate NADPH: Trp13, Arg33, and Lys78. Sn-glycerol 3-phosphate contacts are provided by Lys78 and Gly106. Ala110 provides a ligand contact to NADPH. 5 residues coordinate sn-glycerol 3-phosphate: Lys161, Asp214, Ser224, Arg225, and Asn226. Lys161 serves as the catalytic Proton acceptor. An NADPH-binding site is contributed by Arg225. An NADPH-binding site is contributed by Glu251.

Belongs to the NAD-dependent glycerol-3-phosphate dehydrogenase family.

It is found in the cytoplasm. It carries out the reaction sn-glycerol 3-phosphate + NAD(+) = dihydroxyacetone phosphate + NADH + H(+). The catalysed reaction is sn-glycerol 3-phosphate + NADP(+) = dihydroxyacetone phosphate + NADPH + H(+). Its pathway is membrane lipid metabolism; glycerophospholipid metabolism. Its function is as follows. Catalyzes the reduction of the glycolytic intermediate dihydroxyacetone phosphate (DHAP) to sn-glycerol 3-phosphate (G3P), the key precursor for phospholipid synthesis. The chain is Glycerol-3-phosphate dehydrogenase [NAD(P)+] from Synechococcus sp. (strain RCC307).